The chain runs to 743 residues: Serine-rich coiled-coil domain-containing protein 1 (743 aa).

Disordered regions lie at residues 1-125 (MGDS…SRNK) and 156-175 (KSEG…SVKQ). Over residues 29–56 (LPSSPSSSNTVGVHSSSPSSTNSSSGST) the composition is skewed to low complexity. Polar residues predominate over residues 81 to 102 (EPTNQNLSISNGAQPGQSSMQK). Residues 672–713 (MKDECSMLKLQLKEKDELISQLQEELEKVQHLQKAFASRVDK) are a coiled coil.

This sequence belongs to the CCSER family.

This is Serine-rich coiled-coil domain-containing protein 1 (CCSER1) from Bos taurus (Bovine).